We begin with the raw amino-acid sequence, 151 residues long: Small ribosomal subunit protein uS11 (151 aa).

Ser-16 carries the post-translational modification Phosphoserine. Glycyl lysine isopeptide (Lys-Gly) (interchain with G-Cter in SUMO2) cross-links involve residues Lys-61, Lys-63, and Lys-106. Residues Asp-131 to Leu-151 form a disordered region. Thr-133 carries the phosphothreonine modification. At Ser-139 the chain carries Phosphoserine. Positions Arg-142–Leu-151 are enriched in basic residues.

The protein belongs to the universal ribosomal protein uS11 family. As to quaternary structure, component of the small ribosomal subunit. Part of the small subunit (SSU) processome, composed of more than 70 proteins and the RNA chaperone small nucleolar RNA (snoRNA) U3.

It is found in the cytoplasm. The protein resides in the nucleus. Its subcellular location is the nucleolus. In terms of biological role, component of the small ribosomal subunit. The ribosome is a large ribonucleoprotein complex responsible for the synthesis of proteins in the cell. Part of the small subunit (SSU) processome, first precursor of the small eukaryotic ribosomal subunit. During the assembly of the SSU processome in the nucleolus, many ribosome biogenesis factors, an RNA chaperone and ribosomal proteins associate with the nascent pre-rRNA and work in concert to generate RNA folding, modifications, rearrangements and cleavage as well as targeted degradation of pre-ribosomal RNA by the RNA exosome. In Mus musculus (Mouse), this protein is Small ribosomal subunit protein uS11 (Rps14).